Here is a 104-residue protein sequence, read N- to C-terminus: Circadian clock oscillator protein KaiB (104 aa).

This sequence belongs to the KaiB family. In terms of assembly, the KaiABC complex composition changes during the circadian cycle to control KaiC phosphorylation. Complexes KaiC(6), KaiA(2-4):KaiC(6), KaiB(6):KaiC(6) and KaiC(6):KaiB(6):KaiA(12) are among the most important forms, many form cooperatively. Undergoes a major conformational rearrangment; in the free state forms homotetramers as a dimer of dimers. When bound to the CI domain of KaiC switches to a monomeric thioredoxin-fold (KaiB(fs)). KaiB(fs) binds CikA, leading it to dephosphorylate phospho-RpaA.

Key component of the KaiABC oscillator complex, which constitutes the main circadian regulator in cyanobacteria. Complex composition changes during the circadian cycle to control KaiC phosphorylation. KaiA stimulates KaiC autophosphorylation, while KaiB sequesters KaiA, leading to KaiC autodephosphorylation. Phospho-Ser-431 KaiC accumulation triggers binding of KaiB to form the KaiB(6):KaiC(6) complex, leading to changes in output regulators CikA and SasA. KaiB switches to a thioredoxin-like fold (KaiB(fs)) when bound to KaiC. KaiB(6):KaiC(6) formation exposes a site for KaiA binding that sequesters KaiA from KaiC, making the KaiC(6):KaiB(6):KaiA(12) complex that results in KaiC autodephosphorylation. In terms of biological role, a metamorphic protein which reversibly switches between an inactive tetrameric fold and a rare, thioredoxin-like monomeric fold (KaiB(fs)). KaiB(fs) binds phospho-KaiC, KaiA and CikA. KaiA and CikA compete for binding to KaiB(fs), and KaiB(fs) and SasA compete for binding to KaiC, thus the clock oscillator and output signal pathway are tightly coupled. The sequence is that of Circadian clock oscillator protein KaiB from Trichodesmium erythraeum (strain IMS101).